The following is a 440-amino-acid chain: NADH-quinone oxidoreductase subunit D 2 (440 aa).

This sequence belongs to the complex I 49 kDa subunit family. As to quaternary structure, NDH-1 is composed of 14 different subunits. Subunits NuoB, C, D, E, F, and G constitute the peripheral sector of the complex.

The protein resides in the cell membrane. The catalysed reaction is a quinone + NADH + 5 H(+)(in) = a quinol + NAD(+) + 4 H(+)(out). Its function is as follows. NDH-1 shuttles electrons from NADH, via FMN and iron-sulfur (Fe-S) centers, to quinones in the respiratory chain. The immediate electron acceptor for the enzyme in this species is believed to be a menaquinone. Couples the redox reaction to proton translocation (for every two electrons transferred, four hydrogen ions are translocated across the cytoplasmic membrane), and thus conserves the redox energy in a proton gradient. This Streptomyces coelicolor (strain ATCC BAA-471 / A3(2) / M145) protein is NADH-quinone oxidoreductase subunit D 2.